A 376-amino-acid chain; its full sequence is Erythronate-4-phosphate dehydrogenase (376 aa).

Substrate-binding residues include Ser45 and Thr66. NAD(+)-binding positions include 126-127 (QV), Asp146, Thr174, 201-203 (ASR), and Asp227. Arg203 is a catalytic residue. The active site involves Glu232. His249 functions as the Proton donor in the catalytic mechanism. Residue Gly252 participates in NAD(+) binding. Position 253 (Tyr253) interacts with substrate.

The protein belongs to the D-isomer specific 2-hydroxyacid dehydrogenase family. PdxB subfamily. Homodimer.

The protein resides in the cytoplasm. The enzyme catalyses 4-phospho-D-erythronate + NAD(+) = (R)-3-hydroxy-2-oxo-4-phosphooxybutanoate + NADH + H(+). It functions in the pathway cofactor biosynthesis; pyridoxine 5'-phosphate biosynthesis; pyridoxine 5'-phosphate from D-erythrose 4-phosphate: step 2/5. Catalyzes the oxidation of erythronate-4-phosphate to 3-hydroxy-2-oxo-4-phosphonooxybutanoate. In Ectopseudomonas mendocina (strain ymp) (Pseudomonas mendocina), this protein is Erythronate-4-phosphate dehydrogenase.